The sequence spans 100 residues: Apolipoprotein C-II (100 aa).

An N-terminal signal peptide occupies residues 1–22; it reads MSSQFLLAFFLVLLVLGYEVQG. The lipid binding stretch occupies residues 66–74; it reads SVDEKLRDM. The segment at 78-100 is lipoprotein lipase cofactor; it reads SSAAMSTYAGIFTDQLFTLLKGE.

The protein belongs to the apolipoprotein C2 family. In terms of processing, proapolipoprotein C-II is synthesized as a sialic acid containing glycoprotein which is subsequently desialylated prior to its proteolytic processing. Proapolipoprotein C-II, the major form found in plasma undergoes proteolytic cleavage of its N-terminal hexapeptide to generate the mature form apolipoprotein C-II, which occurs as the minor form in plasma.

The protein localises to the secreted. In terms of biological role, component of chylomicrons, very low-density lipoproteins (VLDL), low-density lipoproteins (LDL), and high-density lipoproteins (HDL) in plasma. Plays an important role in lipoprotein metabolism as an activator of lipoprotein lipase. The protein is Apolipoprotein C-II (APOC2) of Cricetulus griseus (Chinese hamster).